Reading from the N-terminus, the 119-residue chain is Holo-[acyl-carrier-protein] synthase (119 aa).

Residues aspartate 8 and glutamate 58 each coordinate Mg(2+).

It belongs to the P-Pant transferase superfamily. AcpS family. Mg(2+) serves as cofactor.

The protein localises to the cytoplasm. The enzyme catalyses apo-[ACP] + CoA = holo-[ACP] + adenosine 3',5'-bisphosphate + H(+). Functionally, transfers the 4'-phosphopantetheine moiety from coenzyme A to a Ser of acyl-carrier-protein. This chain is Holo-[acyl-carrier-protein] synthase, found in Bacillus cytotoxicus (strain DSM 22905 / CIP 110041 / 391-98 / NVH 391-98).